Reading from the N-terminus, the 262-residue chain is Hemin import ATP-binding protein HmuV (262 aa).

The ABC transporter domain occupies 3–244 (LQARNLTLAR…DHMRRVYGIE (242 aa)). An ATP-binding site is contributed by 35 to 42 (GANGAGKS).

The protein belongs to the ABC transporter superfamily. Heme (hemin) importer (TC 3.A.1.14.5) family. In terms of assembly, the complex is composed of two ATP-binding proteins (HmuV), two transmembrane proteins (HmuU) and a solute-binding protein (HmuT).

The protein resides in the cell inner membrane. Its function is as follows. Part of the ABC transporter complex HmuTUV involved in hemin import. Responsible for energy coupling to the transport system. This chain is Hemin import ATP-binding protein HmuV, found in Bordetella bronchiseptica (strain ATCC BAA-588 / NCTC 13252 / RB50) (Alcaligenes bronchisepticus).